We begin with the raw amino-acid sequence, 213 residues long: Proton-translocating ferredoxin:NAD(+) oxidoreductase complex subunit E (213 aa).

Transmembrane regions (helical) follow at residues 11 to 31 (GLIA…ALAT), 39 to 59 (FTMG…VSII), 69 to 89 (VPVY…VMQA), 93 to 113 (LLYK…IILA), 128 to 148 (FFDG…IGMI), and 170 to 190 (ALIM…VAIV).

This sequence belongs to the NqrDE/RnfAE family. The complex is composed of six subunits: RnfA, RnfB, RnfC, RnfD, RnfE and RnfG.

Its subcellular location is the cell membrane. Its function is as follows. Part of a membrane-bound complex that couples electron transfer with translocation of ions across the membrane. Couples electron transfer from reduced ferredoxin to NAD(+) with translocation of H(+) out of the cell. Essential for energy conservation during autotrophic growth. Contributes to ATP synthesis during heterotrophic growth. This is Proton-translocating ferredoxin:NAD(+) oxidoreductase complex subunit E from Clostridium ljungdahlii (strain ATCC 55383 / DSM 13528 / PETC).